Consider the following 356-residue polypeptide: Tyrosine recombinase XerS (356 aa).

The Core-binding (CB) domain maps to 16–121 (IMPWFVLDYY…ALSSLYKYLT (106 aa)). Residues 169–354 (EFLDYVDCEY…VNDEQKNALD (186 aa)) enclose the Tyr recombinase domain. Residues Arg210, Lys234, His306, Arg309, and His332 contribute to the active site. Tyr341 acts as the O-(3'-phospho-DNA)-tyrosine intermediate in catalysis.

This sequence belongs to the 'phage' integrase family. XerS subfamily.

The protein localises to the cytoplasm. FtsK is required for recombination. Site-specific tyrosine recombinase, which acts by catalyzing the cutting and rejoining of the recombining DNA molecules. Essential to convert dimers of the bacterial chromosome into monomers to permit their segregation at cell division. The protein is Tyrosine recombinase XerS of Streptococcus uberis (strain ATCC BAA-854 / 0140J).